The primary structure comprises 413 residues: MENSGKANKKDTHDGPPKEIKLPTSEALLDYQCQIKEDAVEQFMFQIKTLRKKNQKYHERNSRLKEEQIWHIRHLLKELSEEKAEGLPVVTREDVEEAMKEKWKFERDQEKNLRDMRMQISNAEKLFLEKLSEKEYWEEYKNVGSERHAKLITSLQNDINTVKENAEKMSEHYKITLEDTRKKIIKETLLQLDQKKEWATQNAVKLIDKGSYLEIWENDWLKKEVAIHRKEVEELKNAIHELEAENLVLIDQLSNCRLVDLKIPRRLYLTQAAGLEVPPEEMSLELPETHIEEKSELQPTEVESRDLMSSSDESTILHLSHENSIEDLQYVKIDKEENSGTEFGDTDMKYLLYEDEKDFKDYVNLGPLGVKLMSVESKKMPIHFQEKEIPVKLYKDVRSPESHITYKMMKSFL.

A disordered region spans residues 1-21 (MENSGKANKKDTHDGPPKEIK). The segment covering 8-21 (NKKDTHDGPPKEIK) has biased composition (basic and acidic residues). Coiled coils occupy residues 37–184 (EDAV…RKKI) and 216–256 (WEND…LSNC).

The chain is Coiled-coil domain-containing protein 83 (CCDC83) from Homo sapiens (Human).